The sequence spans 552 residues: Arginine--tRNA ligase (552 aa).

Residues 123–133 (ANPTGPLTIGR) carry the 'HIGH' region motif.

It belongs to the class-I aminoacyl-tRNA synthetase family. In terms of assembly, monomer.

The protein resides in the cytoplasm. The catalysed reaction is tRNA(Arg) + L-arginine + ATP = L-arginyl-tRNA(Arg) + AMP + diphosphate. The chain is Arginine--tRNA ligase from Chlorobium phaeovibrioides (strain DSM 265 / 1930) (Prosthecochloris vibrioformis (strain DSM 265)).